The chain runs to 953 residues: Nucleotide-binding oligomerization domain-containing protein 1 (953 aa).

The CARD domain maps to 15–107 (GCHSHIKLLK…VDLRLWLSEI (93 aa)). In terms of domain architecture, NACHT spans 196–531 (ETVFVFGDAG…AFFTAFFLVA (336 aa)). 202 to 209 (GDAGVGKS) lines the ATP pocket. S-palmitoyl cysteine attachment occurs at residues C558 and C567. LRR repeat units lie at residues 702–725 (FHRQ…ELQP), 727–750 (FSRL…VLCE), 755–778 (YKIV…YVAQ), 783–806 (CRGL…CVAL), 839–862 (HPSL…SLAQ), 867–890 (NTTL…CFAE), 895–918 (NQTL…QLAR), and 923–946 (NTAI…VFEN). Residue C952 is the site of S-palmitoyl cysteine attachment.

It belongs to the NOD1-NOD2 family. Homooligomer: homooligomerizes following ligand-binding, promoting RIPK2 recruitment. Interacts (via CARD domain) with RIPK2 (via CARD domain). Following RIPK2 recruitment, RIPK2 homooligomerizes via its CARD domain and forms long filaments named RIPosomes. Interacts (via CARD domain) with ubiquitin; inhibiting interaction with RIPK2. Interacts with ARHGEF2. Interacts with NLRP10 and recruits it to the cell membrane following invasive bacterial infection. Interacts with IFIH1; this interaction promotes transcription of antiviral genes and inhibition of viral replication. Interacts with Irgm1; promoting NOD1 degradation. Interacts with ATG16L1. Post-translationally, ubiquitinated. 'Lys-48'-linked polyubiquitination by RNF34 promotes proteasomal degradation and thereby negatively regulates NOD1 for instance in NF-kappa-B activation. In terms of processing, palmitoylated. Palmitoylation is required for proper recruitment to the bacterial entry site and hence for proper signaling upon cognate peptidoglycan detection. Degraded via selective autophagy following interaction with Irgm1. Irgm1 promotes NOD1-RIPK2 RIPosome recruitment to autophagosome membranes, promoting their SQSTM1/p62-dependent autophagic degradation. Although ubiquitously expressed, NOD1 levels are more abundant in immune cells, the gastrointestinal tract, and adipose tissue.

It localises to the cell membrane. It is found in the apical cell membrane. Its subcellular location is the basolateral cell membrane. The protein resides in the cytoplasm. Functionally, pattern recognition receptor (PRR) that detects bacterial peptidoglycan fragments and other danger signals and thus participates in both innate and adaptive immune responses. Specifically recognizes and binds gamma-D-glutamyl-meso-diaminopimelic acid (iE-DAP), a dipeptide present in peptidoglycan of Gram-negative bacteria. Preferentially binds iE-DAP in tetrapeptide-containing muropeptides (MurNAc-TetraDAP or TetraDAP). Ligand binding triggers oligomerization that facilitates the binding and subsequent activation of the proximal adapter receptor-interacting RIPK2. Following recruitment, RIPK2 undergoes 'Met-1'- (linear) and 'Lys-63'-linked polyubiquitination by E3 ubiquitin-protein ligases XIAP, BIRC2, BIRC3 and the LUBAC complex, becoming a scaffolding protein for downstream effectors, triggering activation of the NF-kappa-B and MAP kinases signaling. This in turn leads to the transcriptional activation of hundreds of genes involved in immune response. Also acts as a regulator of antiviral response elicited by dsRNA and the expression of RLR pathway members by targeting IFIH1 and TRAF3 to modulate the formation of IFIH1-MAVS and TRAF3-MAVS complexes leading to increased transcription of type I IFNs. Also acts as a regulator of autophagy via its interaction with ATG16L1, possibly by recruiting ATG16L1 at the site of bacterial entry. Besides recognizing pathogens, also involved in the endoplasmic reticulum stress response: acts by sensing and binding to the cytosolic metabolite sphingosine-1-phosphate generated in response to endoplasmic reticulum stress, initiating an inflammation process that leads to activation of the NF-kappa-B and MAP kinases signaling. In addition, plays a role in insulin trafficking in beta cells in a cell-autonomous manner. Mechanistically, upon recognizing cognate ligands, NOD1 and RIPK2 localize to insulin vesicles where they recruit RAB1A to direct insulin trafficking through the cytoplasm. This chain is Nucleotide-binding oligomerization domain-containing protein 1, found in Mus musculus (Mouse).